Reading from the N-terminus, the 399-residue chain is Homeobox protein ceh-39 (399 aa).

Disordered stretches follow at residues Pro-32–Glu-91 and Ala-158–Ser-187. Low complexity predominate over residues Ser-60–Ser-79. The segment at residues Asn-205 to Lys-291 is a DNA-binding region (CUT). Positions Ser-315–Lys-374 form a DNA-binding region, homeobox.

Belongs to the CUT homeobox family. In terms of tissue distribution, expressed in hermaphrodite gonads.

Its subcellular location is the nucleus. The protein resides in the chromosome. In terms of biological role, transcriptional regulator which is involved in the sex determination and X chromosome dosage compensation pathways. Directly binds to 5'-ATTGAT-3' sites in the promoter of sex-determining factor xol-1 to negatively regulate its expression and promote hermaphrodite development. Associates with condensed DNA during mitosis. The protein is Homeobox protein ceh-39 of Caenorhabditis elegans.